The primary structure comprises 143 residues: Nitrosuccinic acid decarboxylase npaB (143 aa).

This sequence belongs to the carboxymuconolactone decarboxylase family. The cofactor is Mg(2+).

The protein operates within mycotoxin biosynthesis. Its function is as follows. Nitrosuccinic acid decarboxylase; part of the gene cluster that mediates the biosynthesis of the deadly neurotoxic nitroalkane 3-nitropropanoic acid (3-NPA) that acts as an antimetabolite of succinate and irreversibly inhibits succinate dehydrogenase and disrupts mitochondrial oxidative phosphorylation. NpaB facilitates decarboxylation of nitrosuccinic acid produced by the nitrosuccinic acid synthase npaA to yield the final product of the cluster, the lethal mycotoxin 3-NPA. This Metarhizium robertsii (strain ARSEF 23 / ATCC MYA-3075) (Metarhizium anisopliae (strain ARSEF 23)) protein is Nitrosuccinic acid decarboxylase npaB.